A 420-amino-acid chain; its full sequence is Type II methyltransferase M.NmeDI (420 aa).

Residues Met1–Asp23 are disordered. Positions Thr56 to His411 constitute an SAM-dependent MTase C5-type domain. Residue Cys148 is part of the active site.

The protein belongs to the class I-like SAM-binding methyltransferase superfamily. C5-methyltransferase family.

The catalysed reaction is a 2'-deoxycytidine in DNA + S-adenosyl-L-methionine = a 5-methyl-2'-deoxycytidine in DNA + S-adenosyl-L-homocysteine + H(+). A methylase that recognizes the double-stranded sequence 5'-RCCGGB-3', methylates C-2 on both strands, and protects the DNA from cleavage by the NmeDI endonuclease. This chain is Type II methyltransferase M.NmeDI (nmeDIMP), found in Neisseria meningitidis serogroup C.